Consider the following 366-residue polypeptide: GDSL esterase/lipase At1g74460 (366 aa).

The signal sequence occupies residues 1 to 20 (MKFCAIFVLFIVLAINGYDC). Serine 30 acts as the Nucleophile in catalysis. N-linked (GlcNAc...) asparagine glycosylation is found at asparagine 113 and asparagine 260. Residues aspartate 320 and histidine 323 contribute to the active site.

Belongs to the 'GDSL' lipolytic enzyme family.

The protein localises to the secreted. The chain is GDSL esterase/lipase At1g74460 from Arabidopsis thaliana (Mouse-ear cress).